Here is a 207-residue protein sequence, read N- to C-terminus: Proteasome subunit beta (207 aa).

Residues 1-7 (MVEAFKG) constitute a propeptide, removed in mature form; by autocatalysis. Thr-8 acts as the Nucleophile in catalysis.

The protein belongs to the peptidase T1B family. The 20S proteasome core is composed of 14 alpha and 14 beta subunits that assemble into four stacked heptameric rings, resulting in a barrel-shaped structure. The two inner rings, each composed of seven catalytic beta subunits, are sandwiched by two outer rings, each composed of seven alpha subunits. The catalytic chamber with the active sites is on the inside of the barrel. Has a gated structure, the ends of the cylinder being occluded by the N-termini of the alpha-subunits. Is capped at one or both ends by the proteasome regulatory ATPase, PAN.

It is found in the cytoplasm. It carries out the reaction Cleavage of peptide bonds with very broad specificity.. Its activity is regulated as follows. The formation of the proteasomal ATPase PAN-20S proteasome complex, via the docking of the C-termini of PAN into the intersubunit pockets in the alpha-rings, triggers opening of the gate for substrate entry. Interconversion between the open-gate and close-gate conformations leads to a dynamic regulation of the 20S proteasome proteolysis activity. Its function is as follows. Component of the proteasome core, a large protease complex with broad specificity involved in protein degradation. This Methanothrix thermoacetophila (strain DSM 6194 / JCM 14653 / NBRC 101360 / PT) (Methanosaeta thermophila) protein is Proteasome subunit beta.